A 517-amino-acid polypeptide reads, in one-letter code: ATP synthase subunit beta (517 aa).

Low complexity-rich tracts occupy residues 1–22 (MAKAATPKTTAAAEAKPAAAKA) and 29–42 (AKTAAAKSDAAPKA). Residues 1–42 (MAKAATPKTTAAAEAKPAAAKAPAKKAPAKTAAAKSDAAPKA) are disordered. 195–202 (GGAGVGKT) lines the ATP pocket.

Belongs to the ATPase alpha/beta chains family. As to quaternary structure, F-type ATPases have 2 components, CF(1) - the catalytic core - and CF(0) - the membrane proton channel. CF(1) has five subunits: alpha(3), beta(3), gamma(1), delta(1), epsilon(1). CF(0) has three main subunits: a(1), b(2) and c(9-12). The alpha and beta chains form an alternating ring which encloses part of the gamma chain. CF(1) is attached to CF(0) by a central stalk formed by the gamma and epsilon chains, while a peripheral stalk is formed by the delta and b chains.

The protein resides in the cell inner membrane. It catalyses the reaction ATP + H2O + 4 H(+)(in) = ADP + phosphate + 5 H(+)(out). In terms of biological role, produces ATP from ADP in the presence of a proton gradient across the membrane. The catalytic sites are hosted primarily by the beta subunits. This Brucella anthropi (strain ATCC 49188 / DSM 6882 / CCUG 24695 / JCM 21032 / LMG 3331 / NBRC 15819 / NCTC 12168 / Alc 37) (Ochrobactrum anthropi) protein is ATP synthase subunit beta.